The following is a 178-amino-acid chain: ATP-dependent protease subunit HslV (178 aa).

Residue Thr7 is part of the active site. 3 residues coordinate Na(+): Gly162, Cys165, and Thr168.

Belongs to the peptidase T1B family. HslV subfamily. In terms of assembly, a double ring-shaped homohexamer of HslV is capped on each side by a ring-shaped HslU homohexamer. The assembly of the HslU/HslV complex is dependent on binding of ATP.

It localises to the cytoplasm. It carries out the reaction ATP-dependent cleavage of peptide bonds with broad specificity.. With respect to regulation, allosterically activated by HslU binding. Protease subunit of a proteasome-like degradation complex believed to be a general protein degrading machinery. In Janthinobacterium sp. (strain Marseille) (Minibacterium massiliensis), this protein is ATP-dependent protease subunit HslV.